The following is a 236-amino-acid chain: Purine nucleoside phosphorylase DeoD-type (236 aa).

A purine D-ribonucleoside is bound at residue His-5. Residues Gly-21, Arg-25, Arg-44, and 88-91 (RVGT) each bind phosphate. A purine D-ribonucleoside is bound by residues 180 to 182 (EME) and 204 to 205 (SD). Asp-205 (proton donor) is an active-site residue.

Belongs to the PNP/UDP phosphorylase family. Homohexamer; trimer of homodimers.

The enzyme catalyses a purine D-ribonucleoside + phosphate = a purine nucleobase + alpha-D-ribose 1-phosphate. It carries out the reaction a purine 2'-deoxy-D-ribonucleoside + phosphate = a purine nucleobase + 2-deoxy-alpha-D-ribose 1-phosphate. Functionally, catalyzes the reversible phosphorolytic breakdown of the N-glycosidic bond in the beta-(deoxy)ribonucleoside molecules, with the formation of the corresponding free purine bases and pentose-1-phosphate. The protein is Purine nucleoside phosphorylase DeoD-type of Shewanella amazonensis (strain ATCC BAA-1098 / SB2B).